The following is a 248-amino-acid chain: Pyridoxine 5'-phosphate synthase (248 aa).

Residue N12 participates in 3-amino-2-oxopropyl phosphate binding. 14-15 contributes to the 1-deoxy-D-xylulose 5-phosphate binding site; the sequence is DH. R23 contributes to the 3-amino-2-oxopropyl phosphate binding site. Residue H48 is the Proton acceptor of the active site. 1-deoxy-D-xylulose 5-phosphate contacts are provided by R50 and H55. The active-site Proton acceptor is E75. Residue T105 coordinates 1-deoxy-D-xylulose 5-phosphate. Residue H199 is the Proton donor of the active site. 3-amino-2-oxopropyl phosphate is bound by residues G200 and 221–222; that span reads GH.

It belongs to the PNP synthase family. As to quaternary structure, homooctamer; tetramer of dimers.

Its subcellular location is the cytoplasm. The catalysed reaction is 3-amino-2-oxopropyl phosphate + 1-deoxy-D-xylulose 5-phosphate = pyridoxine 5'-phosphate + phosphate + 2 H2O + H(+). Its pathway is cofactor biosynthesis; pyridoxine 5'-phosphate biosynthesis; pyridoxine 5'-phosphate from D-erythrose 4-phosphate: step 5/5. In terms of biological role, catalyzes the complicated ring closure reaction between the two acyclic compounds 1-deoxy-D-xylulose-5-phosphate (DXP) and 3-amino-2-oxopropyl phosphate (1-amino-acetone-3-phosphate or AAP) to form pyridoxine 5'-phosphate (PNP) and inorganic phosphate. The polypeptide is Pyridoxine 5'-phosphate synthase (Jannaschia sp. (strain CCS1)).